The following is a 101-amino-acid chain: Small ribosomal subunit protein uS14A (101 aa).

The protein belongs to the universal ribosomal protein uS14 family. Part of the 30S ribosomal subunit. Contacts proteins S3 and S10.

In terms of biological role, binds 16S rRNA, required for the assembly of 30S particles and may also be responsible for determining the conformation of the 16S rRNA at the A site. The protein is Small ribosomal subunit protein uS14A of Mycolicibacterium smegmatis (strain ATCC 700084 / mc(2)155) (Mycobacterium smegmatis).